The chain runs to 239 residues: Superoxide dismutase [Mn] 3 (239 aa).

A compositionally biased stretch (polar residues) spans 1–19; sequence ASTQQTPAQSPTASPTVST. Residues 1 to 20 form a disordered region; the sequence is ASTQQTPAQSPTASPTVSTP. An N-terminal signal peptide occupies residues 1–30; it reads ASTQQTPAQSPTASPTVSTPVAYVDRPLTA. Residues His-57, His-112, Asp-195, and His-199 each coordinate Mn(2+).

It belongs to the iron/manganese superoxide dismutase family. Homodimer. Requires Mn(2+) as cofactor.

It carries out the reaction 2 superoxide + 2 H(+) = H2O2 + O2. In terms of biological role, destroys superoxide anion radicals which are normally produced within the cells and which are toxic to biological systems. The polypeptide is Superoxide dismutase [Mn] 3 (sodA3) (Leptolyngbya boryana (Plectonema boryanum)).